The sequence spans 437 residues: Phosphomethylpyrimidine synthase (437 aa).

Substrate contacts are provided by residues Asn-69, Met-98, Tyr-127, His-163, 185–187 (SRG), 226–229 (DACR), and Glu-265. His-269 is a binding site for Zn(2+). Tyr-292 contributes to the substrate binding site. His-333 is a Zn(2+) binding site. Residues Cys-409, Cys-412, and Cys-416 each contribute to the [4Fe-4S] cluster site.

It belongs to the ThiC family. It depends on [4Fe-4S] cluster as a cofactor.

The enzyme catalyses 5-amino-1-(5-phospho-beta-D-ribosyl)imidazole + S-adenosyl-L-methionine = 4-amino-2-methyl-5-(phosphooxymethyl)pyrimidine + CO + 5'-deoxyadenosine + formate + L-methionine + 3 H(+). It functions in the pathway cofactor biosynthesis; thiamine diphosphate biosynthesis. In terms of biological role, catalyzes the synthesis of the hydroxymethylpyrimidine phosphate (HMP-P) moiety of thiamine from aminoimidazole ribotide (AIR) in a radical S-adenosyl-L-methionine (SAM)-dependent reaction. The protein is Phosphomethylpyrimidine synthase of Clostridium novyi (strain NT).